The sequence spans 411 residues: G1/S-specific cyclin pas1 (411 aa).

Disordered stretches follow at residues 210–253 and 307–326; these read LKNQ…PSVL and SLSK…VGVY. Low complexity predominate over residues 218 to 252; sequence PSSSPQTTQDSSPILTMAPSTPVSVGSTPPSTPSV.

The protein belongs to the cyclin family.

In terms of biological role, essential for the control of the cell cycle at the G1/S (start) transition. Interacts with the pef1 protein kinase. The pef1/pas1 complex activates the res2/cdc10 complex. This Schizosaccharomyces pombe (strain 972 / ATCC 24843) (Fission yeast) protein is G1/S-specific cyclin pas1 (pas1).